Here is an 82-residue protein sequence, read N- to C-terminus: U-actitoxin-Avd3k (82 aa).

An N-terminal signal peptide occupies residues 1–16 (MVFLLCFFLVADVSYG). One can recognise a BPTI/Kunitz inhibitor domain in the interval 21–71 (CLLPMDVGRCRARHPRYYYNSSSKRCEKFIYGGCRGNANNFITKKECEKVC). 3 cysteine pairs are disulfide-bonded: C21–C71, C30–C54, and C46–C67. The propeptide occupies 76-82 (RDSPKEN).

This sequence belongs to the venom Kunitz-type family. Sea anemone type 2 potassium channel toxin subfamily.

The protein localises to the secreted. Its subcellular location is the nematocyst. In terms of biological role, dual-function toxin that inhibits both the serine protease trypsin and voltage-gated potassium channels Kv1.2/KCNA2. The protein is U-actitoxin-Avd3k of Anemonia viridis (Snakelocks anemone).